A 599-amino-acid polypeptide reads, in one-letter code: Aspartate--tRNA ligase (599 aa).

An L-aspartate-binding site is contributed by E180. The aspartate stretch occupies residues 204 to 207; the sequence is QIFK. Residue R226 participates in L-aspartate binding. Residues 226–228 and Q235 contribute to the ATP site; that span reads RDE. L-aspartate is bound at residue H454. E488 is an ATP binding site. Position 495 (R495) interacts with L-aspartate. 540–543 is a binding site for ATP; that stretch reads GLDR.

Belongs to the class-II aminoacyl-tRNA synthetase family. Type 1 subfamily. Homodimer.

It localises to the cytoplasm. It carries out the reaction tRNA(Asp) + L-aspartate + ATP = L-aspartyl-tRNA(Asp) + AMP + diphosphate. Catalyzes the attachment of L-aspartate to tRNA(Asp) in a two-step reaction: L-aspartate is first activated by ATP to form Asp-AMP and then transferred to the acceptor end of tRNA(Asp). This is Aspartate--tRNA ligase from Clostridium beijerinckii (strain ATCC 51743 / NCIMB 8052) (Clostridium acetobutylicum).